The primary structure comprises 419 residues: Multiple organellar RNA editing factor 1, mitochondrial (419 aa).

Residues 1-60 (MAMISHRLRRALLTATSYVNRSISSSITPASDFPSVSAAVLKRSVIGRSTEVATRAPARL) constitute a mitochondrion transit peptide. A disordered region spans residues 174 to 401 (KEYGGDKYEN…AGQPGSDQVR (228 aa)). Residues 237-252 (GPQQGYATPGQGQGTQ) are compositionally biased toward low complexity. Over residues 310–327 (GQGGSGNYSQGPQGGYNQ) the composition is skewed to gly residues. The span at 342 to 356 (GPASGAGNLGPAPGA) shows a compositional bias: low complexity. Over residues 357–367 (GNPGYGQGYSG) the composition is skewed to gly residues. A compositionally biased stretch (polar residues) spans 371 to 401 (EQNQTFPQADQRNRDWNNNNPAGQPGSDQVR).

It belongs to the MORF family. In terms of assembly, homodimer and heterodimer with MORF3. Heterodimers with MORF8/RIP1, MORF4/RIP4 and MORF6/RIP6. Interacts with PCMP-E90/MEF13. Interacts with PCMP-H13/MEF35.

It localises to the mitochondrion. Functionally, involved in organellar RNA editing. Required for the processing of numerous RNA editing sites in mitochondria. Binds to the mitochondrial MEF19 and MEF21 factors, two pentatricopeptide repeat-containing proteins involved in RNA editing. This Arabidopsis thaliana (Mouse-ear cress) protein is Multiple organellar RNA editing factor 1, mitochondrial.